We begin with the raw amino-acid sequence, 953 residues long: UPF0746 protein DDB_G0281301 (953 aa).

A compositionally biased stretch (basic and acidic residues) spans Met-1–Glu-10. The interval Met-1–Leu-23 is disordered. A compositionally biased stretch (acidic residues) spans Asn-11–Asp-21. One can recognise an SAP domain in the interval Tyr-35 to Phe-69.

Belongs to the UPF0746 family.

The protein is UPF0746 protein DDB_G0281301 of Dictyostelium discoideum (Social amoeba).